A 285-amino-acid polypeptide reads, in one-letter code: MTATLIDGNALSKTLRAQAAKRAAALAARGHRPGLAVILVGDNPASEVYVRNKIKACEDNGFFSLKDRYPATLSEPELLARIGELNRDPKIHGILVQLPLPAHIDSHKVIEAIAPEKDVDGFHVANAGALLTGKPLFRPCTPYGVMKMFEAYKIPLQGANAVVIGRSNIVGKPMALLLLEAGATVTICHSKTRDLAAHTREADIVVAAVGKRNVLTADMVKPGATVIDVGMNRNDEGKLCGDVDFAGVSQVAGHITPVPGGVGPMTITMLLVNTIEAAERAAAAA.

NADP(+)-binding positions include 165–167 (GRS) and Ser190.

This sequence belongs to the tetrahydrofolate dehydrogenase/cyclohydrolase family. In terms of assembly, homodimer.

The catalysed reaction is (6R)-5,10-methylene-5,6,7,8-tetrahydrofolate + NADP(+) = (6R)-5,10-methenyltetrahydrofolate + NADPH. It carries out the reaction (6R)-5,10-methenyltetrahydrofolate + H2O = (6R)-10-formyltetrahydrofolate + H(+). It participates in one-carbon metabolism; tetrahydrofolate interconversion. Functionally, catalyzes the oxidation of 5,10-methylenetetrahydrofolate to 5,10-methenyltetrahydrofolate and then the hydrolysis of 5,10-methenyltetrahydrofolate to 10-formyltetrahydrofolate. This Burkholderia thailandensis (strain ATCC 700388 / DSM 13276 / CCUG 48851 / CIP 106301 / E264) protein is Bifunctional protein FolD.